The sequence spans 430 residues: Serine--tRNA ligase (430 aa).

Thr237 to Glu239 lines the L-serine pocket. Arg268–Glu270 contributes to the ATP binding site. Glu291 is an L-serine binding site. Glu355–Ser358 is a binding site for ATP. Residue Ser391 coordinates L-serine.

This sequence belongs to the class-II aminoacyl-tRNA synthetase family. Type-1 seryl-tRNA synthetase subfamily. As to quaternary structure, homodimer. The tRNA molecule binds across the dimer.

The protein localises to the cytoplasm. It carries out the reaction tRNA(Ser) + L-serine + ATP = L-seryl-tRNA(Ser) + AMP + diphosphate + H(+). The catalysed reaction is tRNA(Sec) + L-serine + ATP = L-seryl-tRNA(Sec) + AMP + diphosphate + H(+). It functions in the pathway aminoacyl-tRNA biosynthesis; selenocysteinyl-tRNA(Sec) biosynthesis; L-seryl-tRNA(Sec) from L-serine and tRNA(Sec): step 1/1. Its function is as follows. Catalyzes the attachment of serine to tRNA(Ser). Is also able to aminoacylate tRNA(Sec) with serine, to form the misacylated tRNA L-seryl-tRNA(Sec), which will be further converted into selenocysteinyl-tRNA(Sec). The chain is Serine--tRNA ligase from Citrobacter koseri (strain ATCC BAA-895 / CDC 4225-83 / SGSC4696).